The sequence spans 290 residues: 33 kDa chaperonin (290 aa).

Intrachain disulfides connect Cys-236/Cys-238 and Cys-269/Cys-272.

The protein belongs to the HSP33 family. Under oxidizing conditions two disulfide bonds are formed involving the reactive cysteines. Under reducing conditions zinc is bound to the reactive cysteines and the protein is inactive.

The protein localises to the cytoplasm. Redox regulated molecular chaperone. Protects both thermally unfolding and oxidatively damaged proteins from irreversible aggregation. Plays an important role in the bacterial defense system toward oxidative stress. The chain is 33 kDa chaperonin from Brevibacillus brevis (strain 47 / JCM 6285 / NBRC 100599).